We begin with the raw amino-acid sequence, 356 residues long: UDP-N-acetylglucosamine--N-acetylmuramyl-(pentapeptide) pyrophosphoryl-undecaprenol N-acetylglucosamine transferase (356 aa).

The UDP-N-acetyl-alpha-D-glucosamine site is built by Ser195 and Gln287.

This sequence belongs to the glycosyltransferase 28 family. MurG subfamily.

The protein localises to the cell membrane. It carries out the reaction Mur2Ac(oyl-L-Ala-gamma-D-Glu-L-Lys-D-Ala-D-Ala)-di-trans,octa-cis-undecaprenyl diphosphate + UDP-N-acetyl-alpha-D-glucosamine = beta-D-GlcNAc-(1-&gt;4)-Mur2Ac(oyl-L-Ala-gamma-D-Glu-L-Lys-D-Ala-D-Ala)-di-trans,octa-cis-undecaprenyl diphosphate + UDP + H(+). It participates in cell wall biogenesis; peptidoglycan biosynthesis. In terms of biological role, cell wall formation. Catalyzes the transfer of a GlcNAc subunit on undecaprenyl-pyrophosphoryl-MurNAc-pentapeptide (lipid intermediate I) to form undecaprenyl-pyrophosphoryl-MurNAc-(pentapeptide)GlcNAc (lipid intermediate II). The polypeptide is UDP-N-acetylglucosamine--N-acetylmuramyl-(pentapeptide) pyrophosphoryl-undecaprenol N-acetylglucosamine transferase (Streptococcus sanguinis (strain SK36)).